A 919-amino-acid chain; its full sequence is Kinesin-like protein KIN-6 (919 aa).

Residues 1–59 (MVRLSTKPPNPKVEMNLKEPPITGAGAGAAASPPAPSTLRRNPPRSARPPPTPLPNSKP) form a disordered region. Low complexity predominate over residues 28–45 (GAAASPPAPSTLRRNPPR). The span at 46-56 (SARPPPTPLPN) shows a compositional bias: pro residues. Positions 72–415 (RLKVFLRIRP…LRQASPYMKI (344 aa)) constitute a Kinesin motor domain. 171–178 (GPTGSGKT) lines the ATP pocket. Disordered stretches follow at residues 591–615 (EEVS…TGTG), 674–700 (SESC…SFTD), 711–730 (SPQF…EEER), 737–764 (TTEG…EVNS), and 886–919 (KEEK…GRAQ). Over residues 597–612 (STGHGPERSSDYDDKT) the composition is skewed to basic and acidic residues. Low complexity predominate over residues 685–697 (HSSSSLDHPSDQS). Polar residues predominate over residues 755-764 (TPSCSQEVNS). Residues 886 to 912 (KEEKVKSSRDAMGRSDKLIRLLTDHPP) show a composition bias toward basic and acidic residues.

This sequence belongs to the TRAFAC class myosin-kinesin ATPase superfamily. Kinesin family. KIN-6 subfamily.

This is Kinesin-like protein KIN-6 from Oryza sativa subsp. japonica (Rice).